Here is a 342-residue protein sequence, read N- to C-terminus: D-erythrose-4-phosphate dehydrogenase (342 aa).

Position 12-13 (12-13) interacts with NAD(+); that stretch reads RI. Substrate contacts are provided by residues 154-156, R200, 213-214, and R236; these read SCT and TK. The Nucleophile role is filled by C155. N318 is an NAD(+) binding site.

This sequence belongs to the glyceraldehyde-3-phosphate dehydrogenase family. Epd subfamily. As to quaternary structure, homotetramer.

The protein localises to the cytoplasm. It carries out the reaction D-erythrose 4-phosphate + NAD(+) + H2O = 4-phospho-D-erythronate + NADH + 2 H(+). It participates in cofactor biosynthesis; pyridoxine 5'-phosphate biosynthesis; pyridoxine 5'-phosphate from D-erythrose 4-phosphate: step 1/5. In terms of biological role, catalyzes the NAD-dependent conversion of D-erythrose 4-phosphate to 4-phosphoerythronate. The polypeptide is D-erythrose-4-phosphate dehydrogenase (Salmonella arizonae (strain ATCC BAA-731 / CDC346-86 / RSK2980)).